A 603-amino-acid chain; its full sequence is ATP-dependent lipid A-core flippase (603 aa).

The next 4 membrane-spanning stretches (helical) occupy residues Leu-20–Phe-40, Leu-79–Phe-99, Val-170–Ile-190, and Pro-269–Leu-289. An ABC transmembrane type-1 domain is found at Leu-31–Arg-324. In terms of domain architecture, ABC transporter spans Leu-356–Met-592. Gly-390 to Ser-397 contacts ATP.

The protein belongs to the ABC transporter superfamily. Lipid exporter (TC 3.A.1.106) family. In terms of assembly, homodimer.

The protein localises to the cell inner membrane. The catalysed reaction is ATP + H2O + lipid A-core oligosaccharideSide 1 = ADP + phosphate + lipid A-core oligosaccharideSide 2.. In terms of biological role, involved in lipopolysaccharide (LPS) biosynthesis. Translocates lipid A-core from the inner to the outer leaflet of the inner membrane. Transmembrane domains (TMD) form a pore in the inner membrane and the ATP-binding domain (NBD) is responsible for energy generation. This chain is ATP-dependent lipid A-core flippase, found in Pseudomonas aeruginosa (strain ATCC 15692 / DSM 22644 / CIP 104116 / JCM 14847 / LMG 12228 / 1C / PRS 101 / PAO1).